Consider the following 144-residue polypeptide: Putative pre-16S rRNA nuclease (144 aa).

It belongs to the YqgF nuclease family.

The protein localises to the cytoplasm. Could be a nuclease involved in processing of the 5'-end of pre-16S rRNA. In Ralstonia nicotianae (strain ATCC BAA-1114 / GMI1000) (Ralstonia solanacearum), this protein is Putative pre-16S rRNA nuclease.